Reading from the N-terminus, the 426-residue chain is Pannexin-1 (426 aa).

Residues 1 to 40 (MAIAHLATEYVFSDFLLKEPTEPKFKGLRLELAVDKMVTC) lie on the Cytoplasmic side of the membrane. Cys40 is modified (S-nitrosocysteine). A helical transmembrane segment spans residues 41 to 61 (IAVGLPLLLISLAFAQEISIG). The Extracellular portion of the chain corresponds to 62-106 (TQISCFSPSSFSWRQAAFVDSYCWAAVQQKNSLQSESGNLPLWLH). Disulfide bonds link Cys66/Cys264 and Cys84/Cys245. A helical membrane pass occupies residues 107–127 (KFFPYILLLFAILLYLPALFW). Residues 128–216 (RFAAAPHLCS…HLIMKYISCR (89 aa)) are Cytoplasmic-facing. Tyr198 is modified (phosphotyrosine). The helical transmembrane segment at 217 to 237 (LVTFAVVLLACIYLSYYFSLS) threads the bilayer. Residues 238 to 277 (SLSDEFLCSIKSGVLRNDSTIPDSFQCKLIAVGIFQLLSL) lie on the Extracellular side of the membrane. N-linked (GlcNAc...) asparagine glycosylation occurs at Asn254. The chain crosses the membrane as a helical span at residues 278–298 (INLLVYALLVPVVIYTLFVPF). The Cytoplasmic portion of the chain corresponds to 299 to 426 (RQKTDVLKVY…SRQRLLNSSC (128 aa)). Cys346 is modified (S-nitrosocysteine). Positions 407–426 (ETAANNGEKNSRQRLLNSSC) are disordered.

It belongs to the pannexin family. In terms of assembly, homoheptameric. In terms of processing, S-nitrosylation inhibits channel currents and ATP release. N-glycosylation plays a role in cell surface targeting. Glycosylation at its extracellular surface makes unlikely that two oligomers could dock to form an intercellular channel such as in gap junctions. Exists in three glycosylation states: non-glycosylated (GLY0), high-mannose glycosylated (GLY1), and fully mature glycosylated (GLY2). Post-translationally, cleaved by CASP3 and CASP7 during apoptosis. Cleavage opens the channel for the release of metabolites and induces plasma membrane permeability during apoptosis. In terms of processing, phosphorylated at Tyr-198 by SRC. Phosphorylation activates ATP release. Constitutively phosphorylated in vascular smooth muscle cells. As to expression, expressed in the eye, thyroid, prostate, kidney and liver. Abundantly expressed in the CNS, including hippocampus, olfactory bulb, cortex, cerebellum and white matter.

It localises to the cell membrane. It is found in the endoplasmic reticulum membrane. The enzyme catalyses Ca(2+)(in) = Ca(2+)(out). It carries out the reaction ATP(in) = ATP(out). It catalyses the reaction K(+)(in) = K(+)(out). The catalysed reaction is chloride(in) = chloride(out). The enzyme catalyses iodide(out) = iodide(in). It carries out the reaction Na(+)(in) = Na(+)(out). It catalyses the reaction nitrate(in) = nitrate(out). The catalysed reaction is L-aspartate(out) = L-aspartate(in). The enzyme catalyses L-glutamate(out) = L-glutamate(in). It carries out the reaction D-gluconate(in) = D-gluconate(out). It catalyses the reaction spermidine(in) = spermidine(out). Its function is as follows. Ion channel involved in a variety of physiological functions such as blood pressure regulation, apoptotic cell clearance and oogenesis. Forms anion-selective channels with relatively low conductance and an order of permeabilities: nitrate&gt;iodide&gt;chlroride&gt;&gt;aspartate=glutamate=gluconate. Can release ATP upon activation through phosphorylation or cleavage at C-terminus. May play a role as a Ca(2+)-leak channel to regulate ER Ca(2+) homeostasis. Functionally, during apoptosis, the C terminal tail is cleaved by caspases, which opens the main pore acting as a large-pore ATP efflux channel with a broad distribution, which allows the regulated release of molecules and ions smaller than 1 kDa, such as nucleotides ATP and UTP, and selective plasma membrane permeability to attract phagocytes that engulf the dying cells. This Rattus norvegicus (Rat) protein is Pannexin-1 (Panx1).